The chain runs to 83 residues: Aminoacyl carrier protein (83 aa).

Residues 1-80 (MNATIREILA…DTVKLILDGK (80 aa)) enclose the Carrier domain. S35 carries the post-translational modification O-(pantetheine 4'-phosphoryl)serine.

Post-translationally, 4'-phosphopantetheine is transferred from CoA to a specific serine of the apo-form of this carrier protein.

Its function is as follows. Aminoacyl carrier protein. Can be charged with L-alanine, L-glycine or L-serine, via the formation of a thioester bond between the amino acid and the 4'-phosphopantetheinyl prosthetic group, catalyzed by the Atu2573 ligase. This chain is Aminoacyl carrier protein, found in Agrobacterium fabrum (strain C58 / ATCC 33970) (Agrobacterium tumefaciens (strain C58)).